A 39-amino-acid chain; its full sequence is Photosystem II reaction center protein L (39 aa).

The helical transmembrane segment at 18-38 (SLYLGLLLVFVLGILFSSYFF) threads the bilayer.

This sequence belongs to the PsbL family. PSII is composed of 1 copy each of membrane proteins PsbA, PsbB, PsbC, PsbD, PsbE, PsbF, PsbH, PsbI, PsbJ, PsbK, PsbL, PsbM, PsbT, PsbX, PsbY, Psb30/Ycf12, peripheral proteins PsbO, CyanoQ (PsbQ), PsbU, PsbV and a large number of cofactors. It forms dimeric complexes.

The protein resides in the cellular thylakoid membrane. One of the components of the core complex of photosystem II (PSII). PSII is a light-driven water:plastoquinone oxidoreductase that uses light energy to abstract electrons from H(2)O, generating O(2) and a proton gradient subsequently used for ATP formation. It consists of a core antenna complex that captures photons, and an electron transfer chain that converts photonic excitation into a charge separation. This subunit is found at the monomer-monomer interface and is required for correct PSII assembly and/or dimerization. This Prochlorococcus marinus (strain SARG / CCMP1375 / SS120) protein is Photosystem II reaction center protein L.